A 971-amino-acid polypeptide reads, in one-letter code: MSRPLSKNTEREPKQINGHQNNLSNHKHLSKSLEQEMKAFLIDEKELHLYDDLTKVNPVTTATVLKCLQARYSAGVFYTNAGCTVVAVNPFQPVYKLYSSEVMKDYHSTSNPQGCKPHIFTVAEQAYRNVQSQIQPVNQSIIVSGESGAGKTWTSRCLMKFYATVSASRCYITNEMVERIEGRVLDSNPVMEAFGNACTLRNNNSSRFGKYIQLQLNRAQQITGASIQTYLLEKTRVAHQAPLERNFHIFYQMFKGASRLEREEWNLPEKANFSWLPNYENNLEEDDFEVTKKAMLHLGIDQPTQNNIFKILSGLLHLGNIKFSDSVDESQPCEPLNYTQEFASIAANLLKIPVSHLLERLSIRTITAGKQQVFKKPCRKSECDTRRDCLAKTIYARLFEWLVTVINENICAESCRWNNFIGLLDVYGFESFPENNLEQLCINYANEKLQQHFVSHYLKSQQDEYAAEGLEWSFISYQDNQSCVDLLEGSPISIFSLLNEECRLNRSLDAGQLQSRLENALSHNKCIGRDKFSKKPNFIVSHYAGKVQYQIEDMAEKNKDPVPPELIQLLQESDDHLLQKLFPVDNNKLVYGATNNRAVGVTVVSKFKGSLESLMQILHSTTPHYIRCIKPNVDCQALVFRQEEVLMQLEACGIVETINISAAGFPIRISFENFVERYSVIAPRQSHMKTCFPLKKKQGSIEKTDQLSSKLHTILQAVLPKQCKDSTLSNSLVHCGTTKVFLTHLMVELLEERRLIAISSKAMCIQCCWRSYRQRKLAKQSKAATTIQAAVKGWLTKKYIKRMHSAATVIKRIWKKWKEKMEALAAAELDDSTEDVESTLFSSMLASPVKSLESSKTNLPDKIMTQSAILRFGTLGLVLYGAPAIRKYIVETDELKRNQNILMCLNMLHRNNRYKVTVNREEPGITSIRARPQGSIRFHYKRSPLHFANICPGKINCGITGFNEILLEKTV.

The tract at residues 1 to 25 (MSRPLSKNTEREPKQINGHQNNLSN) is disordered. The Myosin motor domain occupies 48 to 755 (HLYDDLTKVN…MVELLEERRL (708 aa)). 145 to 152 (GESGAGKT) lines the ATP pocket. An actin-binding region spans residues 611–633 (LESLMQILHSTTPHYIRCIKPNV). 2 consecutive IQ domains span residues 758–787 (ISSK…ATTI) and 780–809 (QSKA…AATV). The interval 826–971 (AAELDDSTED…FNEILLEKTV (146 aa)) is myMOMA region.

It belongs to the TRAFAC class myosin-kinesin ATPase superfamily. Myosin family. As to quaternary structure, myosin is a hexamer of 2 heavy chains and 4 light chains.

It localises to the mitochondrion outer membrane. The protein localises to the cytoplasm. It is found in the cytoskeleton. Functionally, actin-based motor molecule with ATPase activity that localizes to the mitochondrion outer membrane. Motor protein that moves towards the plus-end of actin filaments. Required for mitochondrial inheritance during mitosis. May be involved in mitochondrial transport or positioning. This is Unconventional myosin-XIX from Xenopus laevis (African clawed frog).